A 443-amino-acid polypeptide reads, in one-letter code: Signal recognition particle 54 kDa protein (443 aa).

GTP contacts are provided by residues 107-114 (GVQGSGKT), 189-193 (DTAGR), and 247-250 (TKLD).

This sequence belongs to the GTP-binding SRP family. SRP54 subfamily. In terms of assembly, part of the signal recognition particle protein translocation system, which is composed of SRP and FtsY. Archaeal SRP consists of a 7S RNA molecule of 300 nucleotides and two protein subunits: SRP54 and SRP19.

The protein resides in the cytoplasm. The enzyme catalyses GTP + H2O = GDP + phosphate + H(+). Involved in targeting and insertion of nascent membrane proteins into the cytoplasmic membrane. Binds to the hydrophobic signal sequence of the ribosome-nascent chain (RNC) as it emerges from the ribosomes. The SRP-RNC complex is then targeted to the cytoplasmic membrane where it interacts with the SRP receptor FtsY. This is Signal recognition particle 54 kDa protein from Pyrococcus abyssi (strain GE5 / Orsay).